A 674-amino-acid chain; its full sequence is MFERNQKTIFVLDHTRYFSIASEEYISMDFLKGKPSAHSSAGGSSQFSKSLWTCACESSIEYCRVVWDLFPGKKHVRFIVSDTAAHIVNTWSASTQNMSHVMNAMVMVGVPSRSMPQSSDYSVIHGLRAAIEALAEPTDEQSQAMASGVPDDLILNEGRVICITSARDNTSMKSLEDIFNTVLIQQNVLSATPPKKGLGINHCHLVILNIVPLGIDSMVTNRNLLEISPLLDVEIHTVGAPDISYKLTHLILDHYDLASTTVTNIPMKEEQNANSSANYDVEILHSRRAHSITCGPDFSLPTSIKQGATYETVTLKWCTPRGCGSADLQPCLGQFLVTPVDVTSRPSSCLINFLLNGRSVLLEMPRKTGSKATSHMLSARGGEIFIHSLCITRSCMDEAPSIADGPGGRVNDYRTSELGQLMKMSRMVPLKSRDPAAPNLPRRLPRYFPLTTTSTVLFHLQRHLSWLPHFLHLLVKEMDKQDEVRCQQHIHELYKSASRGDVLPFTHTNGARLKPHKAKDQYRLLYRELEQLIQLNASTVHHKNLLESLQTLRAAYGDAPSKSEAGTANLRSFTESPLSPERLEAMSNVSISSSTNSNSLLKASKRRMSNCGTRSLLDIISSAERSQSNKRLDFSGRICTPIGQIAKLYPDFGNKEKDAAAAAAASGVGVAPKE.

Residues 516-538 (HKAKDQYRLLYRELEQLIQLNAS) adopt a coiled-coil conformation. The disordered stretch occupies residues 560–579 (PSKSEAGTANLRSFTESPLS). The span at 564-577 (EAGTANLRSFTESP) shows a compositional bias: polar residues. Positions 601-607 (LKASKRR) match the Nuclear localization signal (NLS) motif.

It belongs to the Integrator subunit 13 family. Belongs to the multiprotein complex Integrator, at least composed of IntS1, IntS2, IntS3, IntS4, omd/IntS5, IntS6, defl/IntS7, IntS8, IntS9, IntS10, IntS11, IntS12, asun/IntS13, IntS14 and IntS15. The core complex associates with protein phosphatase 2A subunits mts/PP2A and Pp2A-29B, to form the Integrator-PP2A (INTAC) complex. Post-translationally, phosphorylated.

The protein resides in the nucleus. Its subcellular location is the cytoplasm. It is found in the perinuclear region. Functionally, component of the integrator complex, a multiprotein complex that terminates RNA polymerase II (Pol II) transcription in the promoter-proximal region of genes. The integrator complex provides a quality checkpoint during transcription elongation by driving premature transcription termination of transcripts that are unfavorably configured for transcriptional elongation: the complex terminates transcription by (1) catalyzing dephosphorylation of the C-terminal domain (CTD) of Pol II subunit Polr2A/Rbp1 and Spt5, and (2) degrading the exiting nascent RNA transcript via endonuclease activity. The integrator complex is also involved in the 3'-end processing of the U7 snRNA, and also the spliceosomal snRNAs U1, U2, U4 and U5. The chain is Protein asunder (asun) from Drosophila pseudoobscura pseudoobscura (Fruit fly).